The chain runs to 140 residues: MAKRPLLLLLLAVWVLAGELWLRTEARASPYGVKLCGREFIRAVIFTCGGSRWRRSDMLAHEALGDVFSDTDSNADSELDEAMASSEWLALTKSPETFYGVQPGWQRTPGALRGSRDVLAGLSSNCCKWGCSKSEISSLC.

The N-terminal stretch at 1 to 26 is a signal peptide; it reads MAKRPLLLLLLAVWVLAGELWLRTEA. 3 cysteine pairs are disulfide-bonded: C36/C127, C48/C140, and C126/C131. The propeptide at 56-116 is connecting peptide; sequence SDMLAHEALG…RTPGALRGSR (61 aa).

It belongs to the insulin family. As to quaternary structure, heterodimer of a B chain and an A chain linked by two disulfide bonds.

The protein resides in the secreted. Its function is as follows. May play a role in neuropeptide signaling processes. Ligand for LGR7, RXFP3 and RXFP4. The protein is Relaxin-3 (RLN3) of Sus scrofa (Pig).